Here is a 375-residue protein sequence, read N- to C-terminus: MRTRAAVALEAGKPLEVMEVNLEGPKAGEVMVEIKATGICHTDEFTLSGADPEGLFPSILGHEGAGVVVEVGPGVTSVKPGNHVIPLYTPECRQCASCLSGKTNLCTAIRATQGQGLMPDGTSRFSMLDGTPIFHYMGCSTFSNYTVLPEIAVAKVREDAPFDKICYIGCGVTTGIGAVINTAKVEIGAKAVVFGLGGIGLNVLQGLRLAGADMIIGVDLNDDKKPMAEHFGMTHFINPKNCENVVQEIVNLTKTPFDQIGGADYSFDCTGNVKVMRDALECTHRGWGQSIIIGVAPAGAEISTRPFQLVTGRVWKGTAFGGARGRTDVPQIVDWYMDGKIEIDPMITHTLSLDDINKGFDLMHAGESIRSVVLY.

Cysteine 40 is a Zn(2+) binding site. Histidine 41 provides a ligand contact to NAD(+). Residues histidine 62, glutamate 63, cysteine 92, cysteine 95, cysteine 98, cysteine 106, and cysteine 170 each contribute to the Zn(2+) site. NAD(+) is bound by residues 195–200 (GLGGIG), aspartate 219, 293–295 (IGV), and 318–320 (TAF).

Belongs to the zinc-containing alcohol dehydrogenase family. Class-III subfamily. Homotetramer. It depends on Zn(2+) as a cofactor.

It carries out the reaction a primary alcohol + NAD(+) = an aldehyde + NADH + H(+). The catalysed reaction is a secondary alcohol + NAD(+) = a ketone + NADH + H(+). It catalyses the reaction S-(hydroxymethyl)glutathione + NADP(+) = S-formylglutathione + NADPH + H(+). The enzyme catalyses S-(hydroxymethyl)glutathione + NAD(+) = S-formylglutathione + NADH + H(+). It carries out the reaction S-nitrosoglutathione + NADH + H(+) = S-(hydroxysulfenamide)glutathione + NAD(+). Its function is as follows. Oxidizes long-chain alcohols and, in the presence of glutathione, is able to oxidize formaldehyde. Also acts as a S-nitroso-glutathione reductase by catalyzing the NADH-dependent reduction of S-nitrosoglutathione, thereby regulating protein S-nitrosylation. In Paracoccus denitrificans, this protein is S-(hydroxymethyl)glutathione dehydrogenase (flhA).